The sequence spans 98 residues: DNA-binding protein Fis (98 aa).

A DNA-binding region (H-T-H motif) is located at residues 74–93 (QTKAANMMGINRGTLRKKLK).

Belongs to the transcriptional regulatory Fis family. In terms of assembly, homodimer.

In terms of biological role, activates ribosomal RNA transcription. Plays a direct role in upstream activation of rRNA promoters. This chain is DNA-binding protein Fis, found in Aliivibrio fischeri (strain ATCC 700601 / ES114) (Vibrio fischeri).